The sequence spans 427 residues: Serine--tRNA ligase (427 aa).

230–232 (TSE) contributes to the L-serine binding site. ATP is bound by residues 260 to 262 (RRE) and V276. E283 contacts L-serine. Position 347 to 350 (347 to 350 (ELTS)) interacts with ATP. T387 provides a ligand contact to L-serine.

This sequence belongs to the class-II aminoacyl-tRNA synthetase family. Type-1 seryl-tRNA synthetase subfamily. In terms of assembly, homodimer. The tRNA molecule binds across the dimer.

The protein resides in the cytoplasm. The enzyme catalyses tRNA(Ser) + L-serine + ATP = L-seryl-tRNA(Ser) + AMP + diphosphate + H(+). It catalyses the reaction tRNA(Sec) + L-serine + ATP = L-seryl-tRNA(Sec) + AMP + diphosphate + H(+). Its pathway is aminoacyl-tRNA biosynthesis; selenocysteinyl-tRNA(Sec) biosynthesis; L-seryl-tRNA(Sec) from L-serine and tRNA(Sec): step 1/1. Its function is as follows. Catalyzes the attachment of serine to tRNA(Ser). Is also able to aminoacylate tRNA(Sec) with serine, to form the misacylated tRNA L-seryl-tRNA(Sec), which will be further converted into selenocysteinyl-tRNA(Sec). This is Serine--tRNA ligase from Micrococcus luteus (strain ATCC 4698 / DSM 20030 / JCM 1464 / CCM 169 / CCUG 5858 / IAM 1056 / NBRC 3333 / NCIMB 9278 / NCTC 2665 / VKM Ac-2230) (Micrococcus lysodeikticus).